A 168-amino-acid chain; its full sequence is S-ribosylhomocysteine lyase (168 aa).

Fe cation contacts are provided by His-54, His-58, and Cys-128.

Belongs to the LuxS family. Homodimer. The cofactor is Fe cation.

The catalysed reaction is S-(5-deoxy-D-ribos-5-yl)-L-homocysteine = (S)-4,5-dihydroxypentane-2,3-dione + L-homocysteine. Involved in the synthesis of autoinducer 2 (AI-2) which is secreted by bacteria and is used to communicate both the cell density and the metabolic potential of the environment. The regulation of gene expression in response to changes in cell density is called quorum sensing. Catalyzes the transformation of S-ribosylhomocysteine (RHC) to homocysteine (HC) and 4,5-dihydroxy-2,3-pentadione (DPD). The protein is S-ribosylhomocysteine lyase of Histophilus somni (strain 2336) (Haemophilus somnus).